The following is a 428-amino-acid chain: D-amino acid dehydrogenase (428 aa).

Residue 3–17 participates in FAD binding; the sequence is VVILGSGVVGVASAY.

This sequence belongs to the DadA oxidoreductase family. It depends on FAD as a cofactor.

It carries out the reaction a D-alpha-amino acid + A + H2O = a 2-oxocarboxylate + AH2 + NH4(+). It functions in the pathway amino-acid degradation; D-alanine degradation; NH(3) and pyruvate from D-alanine: step 1/1. Oxidative deamination of D-amino acids. The protein is D-amino acid dehydrogenase of Burkholderia lata (strain ATCC 17760 / DSM 23089 / LMG 22485 / NCIMB 9086 / R18194 / 383).